We begin with the raw amino-acid sequence, 612 residues long: MNKQVIFGLLLACILVCISGQDEEDYQESPTVLIALLVRNKAHILPMFLSYLEQQDYPKERIAIWLRCDHSNDDSIELLRQWLDNSGDLYHSVSYEFKPEEQSFVNGTSPYEWPASRFKHLIALKEEAFQYGRDIWADYVFFLDADVLLTSKDSLKVLTRLQLPIVAPMLISESLYSNFWCGMTEDYYYRRTDEYKEIYHVKKQGSFPVPMVHTAVLVNMNHRAVRNLTFDRNKLVELQKSRQQEPLYDGPADDIIVFAISANSSGIPLHICNDITFGYILQPLEPGDTLDHDVQQLVNLKSIMVNELGAVPPLLDYYKHLEKKPEKSKLSLDRIFMINLKRRPERREKMERLFDEIGIEAEHFPAVDGKELSTERLLEMGVRFLPGYEDPYHHRAMTMGEIGCFLSHYNIWVMMVRKQLKEVLILEDDIRFEPYFRQNAVRILNQARNAAQYDLIYFGRKRLKEESEPAVENADNLVHAGYSYWTLGYVISLQGALKLLAAKPLDKLIPVDEFLPLMFDRHPNKTWTEAFPKRNLVAFSASPLLLYPIYYTGESGYISDTEDSQQISVETSEEGEARLKSDREQVFDHEQEFKLNPELKLGESLSKSHQEL.

The N-terminal stretch at 1 to 20 (MNKQVIFGLLLACILVCISG) is a signal peptide. 4 N-linked (GlcNAc...) asparagine glycosylation sites follow: Asn-106, Asn-227, Asn-263, and Asn-524. A Prevents secretion from ER motif is present at residues 609 to 612 (HQEL).

Belongs to the glycosyltransferase 25 family.

It localises to the endoplasmic reticulum lumen. The sequence is that of Glycosyltransferase 25 family member from Drosophila melanogaster (Fruit fly).